The sequence spans 611 residues: Muscarinic acetylcholine receptor gar-3 (611 aa).

The Extracellular portion of the chain corresponds to 1–67; that stretch reads MQSSSLGNAD…LLGEEGRMVM (67 aa). Asn28 and Asn33 each carry an N-linked (GlcNAc...) asparagine glycan. Residues 68 to 88 form a helical membrane-spanning segment; that stretch reads IVVIGAMFALVTSLGNLMVMV. Residues 89–101 lie on the Cytoplasmic side of the membrane; it reads SFKIDKQLQTISN. A helical membrane pass occupies residues 102–122; the sequence is YFLFSLAVADIAIGVISIPMF. Over 123 to 140 the chain is Extracellular; that stretch reads TYYTAIQKWDLGYTMCQF. A disulfide bond links Cys138 and Cys218. A helical membrane pass occupies residues 141–161; that stretch reads WLCIDYLMSNASVLNLLLISF. The Cytoplasmic segment spans residues 162 to 181; sequence DRYFSVTRPLSYRPRRTTKK. A helical membrane pass occupies residues 182–202; that stretch reads ALTMIACTYIISLILWPPWII. The Extracellular portion of the chain corresponds to 203 to 227; that stretch reads SWPYIEGKFTAEPGTCVVQFLQTNP. Residues 228 to 248 form a helical membrane-spanning segment; sequence YVTVGTAVAAFYLPVTIMCIL. Residues 249 to 525 lie on the Cytoplasmic side of the membrane; that stretch reads YTRVYWETQK…RKQESKAAKT (277 aa). Disordered stretches follow at residues 299 to 364, 377 to 432, 446 to 477, and 500 to 519; these read RRSM…SSEA, SHFA…NNNS, SRPS…NSEI, and FSSQ…RKQE. The span at 307–317 shows a compositional bias: low complexity; that stretch reads SSTSIIKSSGS. The span at 503–519 shows a compositional bias: basic and acidic residues; sequence QERKSEKEQRKNERKQE. The chain crosses the membrane as a helical span at residues 526–546; that stretch reads LSAILCAFIATWTPYNLIVCW. Residues 547–557 are Extracellular-facing; it reads EAFFPNTVPNV. A helical transmembrane segment spans residues 558 to 578; sequence LWTFSYFLCYINSTINPLCYA. Residues 579–611 lie on the Cytoplasmic side of the membrane; it reads LCNARFRHTYMRILRCKFKAERPTMNQGYVRRN.

Belongs to the G-protein coupled receptor 1 family. Muscarinic acetylcholine receptor subfamily.

It is found in the cell membrane. In terms of biological role, the muscarinic acetylcholine receptor mediates various cellular responses, including inhibition of adenylate cyclase, breakdown of phosphoinositides and modulation of potassium channels through the action of G proteins. Primary transducing effect is Pi turnover. Enhances the release of the neurotransmitter acetlycholine in cholinergic motor neurons, which in turn positively feeds back to depolarize body wall muscles and allows for the maintenance of normal body posture and locomotion. This is Muscarinic acetylcholine receptor gar-3 (gar-3) from Caenorhabditis elegans.